Reading from the N-terminus, the 304-residue chain is ATP synthase gamma chain (304 aa).

Belongs to the ATPase gamma chain family. In terms of assembly, F-type ATPases have 2 components, CF(1) - the catalytic core - and CF(0) - the membrane proton channel. CF(1) has five subunits: alpha(3), beta(3), gamma(1), delta(1), epsilon(1). CF(0) has three main subunits: a, b and c.

The protein localises to the cell membrane. Its function is as follows. Produces ATP from ADP in the presence of a proton gradient across the membrane. The gamma chain is believed to be important in regulating ATPase activity and the flow of protons through the CF(0) complex. The protein is ATP synthase gamma chain of Thermobifida fusca (strain YX).